The chain runs to 242 residues: ATP synthase subunit a (242 aa).

Transmembrane regions (helical) follow at residues 29–49 (SSIY…LAFY), 84–104 (FIPL…LGMT), 114–134 (IIVT…VGFV), 140–160 (FLTL…IIVI), 181–201 (MAGH…MIYL), and 203–223 (FLPI…AILQ).

This sequence belongs to the ATPase A chain family. In terms of assembly, F-type ATPases have 2 components, CF(1) - the catalytic core - and CF(0) - the membrane proton channel. CF(1) has five subunits: alpha(3), beta(3), gamma(1), delta(1), epsilon(1). CF(0) has three main subunits: a(1), b(2) and c(9-12). The alpha and beta chains form an alternating ring which encloses part of the gamma chain. CF(1) is attached to CF(0) by a central stalk formed by the gamma and epsilon chains, while a peripheral stalk is formed by the delta and b chains.

Its subcellular location is the cell inner membrane. In terms of biological role, key component of the proton channel; it plays a direct role in the translocation of protons across the membrane. This Rickettsia peacockii (strain Rustic) protein is ATP synthase subunit a.